We begin with the raw amino-acid sequence, 59 residues long: Large ribosomal subunit protein bL32B (59 aa).

This sequence belongs to the bacterial ribosomal protein bL32 family.

This Enterococcus faecalis (strain ATCC 700802 / V583) protein is Large ribosomal subunit protein bL32B (rpmF2).